The following is an 876-amino-acid chain: MTVTMKVMKKNNRKSWSLYIAMALLIPCLSYSKQLYATVYSGVPVWEEAAPVLFCASDANLTSTEQHNIWASQACVPTDPNPHEFPLGNVTDNFDIWKNYMVDQMHEDIISLWEQSLKPCEKMTFLCVQMNCVDLQTNKTGLLNETINEMRNCSFNVTTVLTDKKEQKQALFYVSDLSKVNDSNAVNGTTYMLTNCNSTIIKQACPKVSFEPIPIHYCAPTGYAIFKCNDTDFNGTGLCHNISVVTCTHGIKPTVSTQLILNGTLSREKIRIMGKNITESAKNIIVTLNTPINMTCIREGIAEVQDIYTGPMRWRSMTLKRSNNTSPRSRVAYCTYNKTVWENALQQTAIRYLNLVNQTENVTIIFSRTSGGDAEVSHLHFNCHGEFFYCNTSGMFNYTFINCTKSGCQEIKGSNETNKNGTIPCKLRQLVRSWMKGESRIYAPPIPGNLTCHSNITGMILQLDQPWNSTGENTLRPVGGDMKDIWRTKLYNYKVVQIKPFSVAPTKMSRPIINIHTPHREKRAVGLGMLFLGVLSAAGSTMGAAATALTVRTHSVLKGIVQQQDNLLRAIQAQQHLLRLSVWGIRQLRARLQALETLIQNQQRLNLWGCKGKLICYTSVKWNTSWSGRYNDDSIWDNLTWQQWDQHINNVSSIIYDEIQAAQDQQEKNVKALLELDEWASLWNWFDITKWLWYIKIAIIIVGALIGIRVIMIILNLVKNIRQGYQPLSLQIPVPHRQEAETPGRTGEEGGEGDRPKWTALPPGFLQQLYTDLRTIILWTYHLLSNLISGIRRLIDYLGLGLWILGQKTIEACRLCGAVMQYWLQELKNSATNLLDTIAVSVANWTDGIILGLQRIGQGFLHIPRRIRQGAERILV.

Positions 1–33 (MTVTMKVMKKNNRKSWSLYIAMALLIPCLSYSK) are cleaved as a signal peptide. The Extracellular segment spans residues 34–697 (QLYATVYSGV…ITKWLWYIKI (664 aa)). Cysteines 55 and 75 form a disulfide. Residues Asn-60, Asn-89, Asn-138, Asn-144, Asn-152, Asn-156, Asn-181, Asn-187, Asn-197, Asn-229, Asn-234, Asn-241, Asn-262, Asn-276, Asn-293, Asn-323, Asn-337, Asn-357, and Asn-361 are each glycosylated (N-linked (GlcNAc...) asparagine; by host). 5 cysteine pairs are disulfide-bonded: Cys-120–Cys-205, Cys-127–Cys-196, Cys-132–Cys-153, Cys-218–Cys-247, and Cys-228–Cys-239. A V1 region spans residues 132–152 (CVDLQTNKTGLLNETINEMRN). Positions 153 to 196 (CSFNVTTVLTDKKEQKQALFYVSDLSKVNDSNAVNGTTYMLTNC) are V2. A V3 region spans residues 296–333 (CIREGIAEVQDIYTGPMRWRSMTLKRSNNTSPRSRVAY). Cys-296 and Cys-334 are disulfide-bonded. The interval 369-379 (TSGGDAEVSHL) is CD4-binding loop. 2 disulfide bridges follow: Cys-383/Cys-452 and Cys-390/Cys-425. A V4 region spans residues 390-425 (CNTSGMFNYTFINCTKSGCQEIKGSNETNKNGTIPC). 8 N-linked (GlcNAc...) asparagine; by host glycosylation sites follow: Asn-391, Asn-397, Asn-402, Asn-415, Asn-420, Asn-449, Asn-455, and Asn-468. V5 stretches follow at residues 468-478 (NSTGENTLRPV) and 470-478 (TGENTLRPV). The fusion peptide stretch occupies residues 524-544 (AVGLGMLFLGVLSAAGSTMGA). The tract at residues 586-604 (RQLRARLQALETLIQNQQR) is immunosuppression. An intrachain disulfide couples Cys-610 to Cys-616. 3 N-linked (GlcNAc...) asparagine; by host glycosylation sites follow: Asn-623, Asn-638, and Asn-650. Residues 646–680 (QHINNVSSIIYDEIQAAQDQQEKNVKALLELDEWA) adopt a coiled-coil conformation. An MPER; binding to GalCer region spans residues 675-696 (ELDEWASLWNWFDITKWLWYIK). A helical membrane pass occupies residues 698–718 (AIIIVGALIGIRVIMIILNLV). The Cytoplasmic portion of the chain corresponds to 719-876 (KNIRQGYQPL…IRQGAERILV (158 aa)). The short motif at 725-728 (YQPL) is the YXXL motif; contains endocytosis signal element.

This sequence belongs to the HIV-1 env protein family. In terms of assembly, the mature envelope protein (Env) consists of a homotrimer of non-covalently associated gp120-gp41 heterodimers. The resulting complex protrudes from the virus surface as a spike. There seems to be as few as 10 spikes on the average virion. Interacts with host CD4, CCR5 and CXCR4. Gp120 also interacts with the C-type lectins CD209/DC-SIGN and CLEC4M/DC-SIGNR (collectively referred to as DC-SIGN(R)). Gp120 and gp41 interact with GalCer. Gp120 interacts with host ITGA4/ITGB7 complex; on CD4+ T-cells, this interaction results in rapid activation of integrin ITGAL/LFA-1, which facilitates efficient cell-to-cell spreading of HIV-1. Gp120 interacts with cell-associated heparan sulfate; this interaction increases virus infectivity on permissive cells and may be involved in infection of CD4- cells. The mature envelope protein (Env) consists of a homotrimer of non-covalently associated gp120-gp41 heterodimers. The resulting complex protrudes from the virus surface as a spike. There seems to be as few as 10 spikes on the average virion. Highly glycosylated by host. The high number of glycan on the protein is reffered to as 'glycan shield' because it contributes to hide protein sequence from adaptive immune system. Post-translationally, palmitoylation of the transmembrane protein and of Env polyprotein (prior to its proteolytic cleavage) is essential for their association with host cell membrane lipid rafts. Palmitoylation is therefore required for envelope trafficking to classical lipid rafts, but not for viral replication. In terms of processing, specific enzymatic cleavages in vivo yield mature proteins. Envelope glycoproteins are synthesized as an inactive precursor that is heavily N-glycosylated and processed likely by host cell furin in the Golgi to yield the mature SU and TM proteins. The cleavage site between SU and TM requires the minimal sequence [KR]-X-[KR]-R. About 2 of the 9 disulfide bonds of gp41 are reduced by P4HB/PDI, following binding to CD4 receptor.

The protein resides in the virion membrane. It is found in the host cell membrane. Its subcellular location is the host endosome membrane. Oligomerizes in the host endoplasmic reticulum into predominantly trimers. In a second time, gp160 transits in the host Golgi, where glycosylation is completed. The precursor is then proteolytically cleaved in the trans-Golgi and thereby activated by cellular furin or furin-like proteases to produce gp120 and gp41. Its function is as follows. Attaches the virus to the host lymphoid cell by binding to the primary receptor CD4. This interaction induces a structural rearrangement creating a high affinity binding site for a chemokine coreceptor like CXCR4 and/or CCR5. Acts as a ligand for CD209/DC-SIGN and CLEC4M/DC-SIGNR, which are respectively found on dendritic cells (DCs), and on endothelial cells of liver sinusoids and lymph node sinuses. These interactions allow capture of viral particles at mucosal surfaces by these cells and subsequent transmission to permissive cells. HIV subverts the migration properties of dendritic cells to gain access to CD4+ T-cells in lymph nodes. Virus transmission to permissive T-cells occurs either in trans (without DCs infection, through viral capture and transmission), or in cis (following DCs productive infection, through the usual CD4-gp120 interaction), thereby inducing a robust infection. In trans infection, bound virions remain infectious over days and it is proposed that they are not degraded, but protected in non-lysosomal acidic organelles within the DCs close to the cell membrane thus contributing to the viral infectious potential during DCs' migration from the periphery to the lymphoid tissues. On arrival at lymphoid tissues, intact virions recycle back to DCs' cell surface allowing virus transmission to CD4+ T-cells. Functionally, acts as a class I viral fusion protein. Under the current model, the protein has at least 3 conformational states: pre-fusion native state, pre-hairpin intermediate state, and post-fusion hairpin state. During fusion of viral and target intracellular membranes, the coiled coil regions (heptad repeats) assume a trimer-of-hairpins structure, positioning the fusion peptide in close proximity to the C-terminal region of the ectodomain. The formation of this structure appears to drive apposition and subsequent fusion of viral and target cell membranes. Complete fusion occurs in host cell endosomes and is dynamin-dependent, however some lipid transfer might occur at the plasma membrane. The virus undergoes clathrin-dependent internalization long before endosomal fusion, thus minimizing the surface exposure of conserved viral epitopes during fusion and reducing the efficacy of inhibitors targeting these epitopes. Membranes fusion leads to delivery of the nucleocapsid into the cytoplasm. This is Envelope glycoprotein gp160 from Homo sapiens (Human).